The chain runs to 188 residues: Adenine phosphoribosyltransferase (188 aa).

Belongs to the purine/pyrimidine phosphoribosyltransferase family. As to quaternary structure, homodimer.

It is found in the cytoplasm. It catalyses the reaction AMP + diphosphate = 5-phospho-alpha-D-ribose 1-diphosphate + adenine. The protein operates within purine metabolism; AMP biosynthesis via salvage pathway; AMP from adenine: step 1/1. Catalyzes a salvage reaction resulting in the formation of AMP, that is energically less costly than de novo synthesis. The chain is Adenine phosphoribosyltransferase from Burkholderia thailandensis (strain ATCC 700388 / DSM 13276 / CCUG 48851 / CIP 106301 / E264).